The sequence spans 370 residues: Lipoyl synthase, mitochondrial (370 aa).

Residues Cys100, Cys105, Cys111, Cys131, Cys135, Cys138, and Ser346 each coordinate [4Fe-4S] cluster. The Radical SAM core domain occupies 116-335 (DKSRATATIM…KEVAEKLGFL (220 aa)).

It belongs to the radical SAM superfamily. Lipoyl synthase family. It depends on [4Fe-4S] cluster as a cofactor.

The protein localises to the mitochondrion. It catalyses the reaction [[Fe-S] cluster scaffold protein carrying a second [4Fe-4S](2+) cluster] + N(6)-octanoyl-L-lysyl-[protein] + 2 oxidized [2Fe-2S]-[ferredoxin] + 2 S-adenosyl-L-methionine + 4 H(+) = [[Fe-S] cluster scaffold protein] + N(6)-[(R)-dihydrolipoyl]-L-lysyl-[protein] + 4 Fe(3+) + 2 hydrogen sulfide + 2 5'-deoxyadenosine + 2 L-methionine + 2 reduced [2Fe-2S]-[ferredoxin]. It functions in the pathway protein modification; protein lipoylation via endogenous pathway; protein N(6)-(lipoyl)lysine from octanoyl-[acyl-carrier-protein]: step 2/2. Functionally, catalyzes the radical-mediated insertion of two sulfur atoms into the C-6 and C-8 positions of the octanoyl moiety bound to the lipoyl domains of lipoate-dependent enzymes, thereby converting the octanoylated domains into lipoylated derivatives. This chain is Lipoyl synthase, mitochondrial (lip5), found in Schizosaccharomyces pombe (strain 972 / ATCC 24843) (Fission yeast).